Here is a 421-residue protein sequence, read N- to C-terminus: NAD-specific glutamate dehydrogenase (421 aa).

Residues lysine 70 and lysine 94 each contribute to the substrate site. Lysine 106 serves as the catalytic Proton donor. 2 residues coordinate NAD(+): threonine 191 and asparagine 222. Serine 355 contacts substrate.

The protein belongs to the Glu/Leu/Phe/Val dehydrogenases family. Homohexamer.

It carries out the reaction L-glutamate + NAD(+) + H2O = 2-oxoglutarate + NH4(+) + NADH + H(+). It functions in the pathway amino-acid degradation; L-glutamate degradation via hydroxyglutarate pathway; crotonoyl-CoA from L-glutamate: step 1/5. This is NAD-specific glutamate dehydrogenase from Peptoniphilus asaccharolyticus (Peptostreptococcus asaccharolyticus).